A 578-amino-acid chain; its full sequence is Isocitrate dehydrogenase kinase/phosphatase (578 aa).

Residues 315–321 (APGIRGM) and Lys336 contribute to the ATP site. Asp371 is a catalytic residue.

This sequence belongs to the AceK family.

It is found in the cytoplasm. It carries out the reaction L-seryl-[isocitrate dehydrogenase] + ATP = O-phospho-L-seryl-[isocitrate dehydrogenase] + ADP + H(+). In terms of biological role, bifunctional enzyme which can phosphorylate or dephosphorylate isocitrate dehydrogenase (IDH) on a specific serine residue. This is a regulatory mechanism which enables bacteria to bypass the Krebs cycle via the glyoxylate shunt in response to the source of carbon. When bacteria are grown on glucose, IDH is fully active and unphosphorylated, but when grown on acetate or ethanol, the activity of IDH declines drastically concomitant with its phosphorylation. The polypeptide is Isocitrate dehydrogenase kinase/phosphatase (Escherichia coli O139:H28 (strain E24377A / ETEC)).